Here is a 244-residue protein sequence, read N- to C-terminus: Putative lipoprotein LprA (244 aa).

Residues 1-24 (MKHPPCSVVAAATAILAVVLAIGG) form the signal peptide. Cysteine 25 is lipidated: N-palmitoyl cysteine. Cysteine 25 carries S-diacylglycerol cysteine lipidation.

It belongs to the LppX/LprAFG lipoprotein family.

The protein resides in the cell membrane. The protein is Putative lipoprotein LprA (lprA) of Mycobacterium bovis (strain ATCC BAA-935 / AF2122/97).